Consider the following 564-residue polypeptide: MPEIDMKPRSRDVTDGIEATAARGMLRAVGMGDEDWAKPQIGVASSWSEITPCNLSLDRLAQGAKEGVHAGGGYPLQFGTISVSDGISMGHEGMHFSLVSREVIADSVETVMMAERLDGSVLLAGCDKSLPGMLMAAARLDLSSVFLYAGSIAPGWVKLSDGTEKEVTIIDAFEAVGACKAGTMSQEDLTRIEKAICPGEGACGGMYTANTMASVAEALGMSLPGSAAPPSADRRRDYFAHRSGEAVVNLIAEGITARDIMTKEAFENAISVVMAFGGSTNAVLHLLAIAREAEVDLQLSDFNRIADRVPHLGDLKPFGRFVMNDVDRVGGVPVVMKALLDAGLLHGDVMTVTGRTMRENLEAMDLAELDGTVIRKMDDPIHATGGISVLHGSLAPEGAVVKTAGFDLDVFEGPARVFERERAAMDALTEGLISKGDVIVIRYEGPKGGPGMREMLAITGAIKGAGLGKDVLLLTDGRFSGGTTGLCIGHMAPEAVDAGPVAFVRDGDRIRVDIAARTLDLLVDEAELAARREGWAPLPPRYTRGVLAKYAKLVHSAAEGAITG.

Cysteine 53 contributes to the [2Fe-2S] cluster binding site. A Mg(2+)-binding site is contributed by aspartate 85. Cysteine 126 provides a ligand contact to [2Fe-2S] cluster. Mg(2+) is bound by residues aspartate 127 and lysine 128. Lysine 128 is subject to N6-carboxylysine. A [2Fe-2S] cluster-binding site is contributed by cysteine 203. Position 454 (glutamate 454) interacts with Mg(2+). The Proton acceptor role is filled by serine 480.

It belongs to the IlvD/Edd family. In terms of assembly, homodimer. Requires [2Fe-2S] cluster as cofactor. Mg(2+) is required as a cofactor.

It carries out the reaction (2R)-2,3-dihydroxy-3-methylbutanoate = 3-methyl-2-oxobutanoate + H2O. It catalyses the reaction (2R,3R)-2,3-dihydroxy-3-methylpentanoate = (S)-3-methyl-2-oxopentanoate + H2O. Its pathway is amino-acid biosynthesis; L-isoleucine biosynthesis; L-isoleucine from 2-oxobutanoate: step 3/4. It participates in amino-acid biosynthesis; L-valine biosynthesis; L-valine from pyruvate: step 3/4. In terms of biological role, functions in the biosynthesis of branched-chain amino acids. Catalyzes the dehydration of (2R,3R)-2,3-dihydroxy-3-methylpentanoate (2,3-dihydroxy-3-methylvalerate) into 2-oxo-3-methylpentanoate (2-oxo-3-methylvalerate) and of (2R)-2,3-dihydroxy-3-methylbutanoate (2,3-dihydroxyisovalerate) into 2-oxo-3-methylbutanoate (2-oxoisovalerate), the penultimate precursor to L-isoleucine and L-valine, respectively. In Clavibacter michiganensis subsp. michiganensis (strain NCPPB 382), this protein is Dihydroxy-acid dehydratase.